The sequence spans 160 residues: Cytochrome c-type biogenesis protein CcmE (160 aa).

Topologically, residues 1-8 are cytoplasmic; that stretch reads MNPRRKKR. Residues 9–29 traverse the membrane as a helical; Signal-anchor for type II membrane protein segment; sequence LGVVLAILFGLSATIGLIIYA. Topologically, residues 30–160 are periplasmic; sequence LNQNMDLFYT…SQEQKQGSDQ (131 aa). Heme-binding residues include His-128 and Tyr-132.

This sequence belongs to the CcmE/CycJ family.

It localises to the cell inner membrane. Functionally, heme chaperone required for the biogenesis of c-type cytochromes. Transiently binds heme delivered by CcmC and transfers the heme to apo-cytochromes in a process facilitated by CcmF and CcmH. The protein is Cytochrome c-type biogenesis protein CcmE of Vibrio cholerae serotype O1 (strain ATCC 39541 / Classical Ogawa 395 / O395).